A 284-amino-acid chain; its full sequence is 4-hydroxybenzoate octaprenyltransferase (284 aa).

9 consecutive transmembrane segments (helical) span residues 19–39, 42–62, 85–105, 107–127, 134–154, 165–185, 211–231, 233–253, and 261–281; these read IPILLILWPTLTALVLASHGL, ISYLVIFTIGVVVMRTVGCII, GQLSIKNAIWLCISLTLVAFI, VLFLNLYTILLSFVALFLAIL, FFAIPQLILGLAFNFGIFMAF, AWIFYIATICWTIAYDTIYAL, ILLFNFLSLLLLIILGIYCDF, SFFYLGVVICSLFFVRNYFLY, and CINAFSANHWIGLIIFIIAVI.

The protein belongs to the UbiA prenyltransferase family. Mg(2+) serves as cofactor.

The protein resides in the cell inner membrane. The catalysed reaction is all-trans-octaprenyl diphosphate + 4-hydroxybenzoate = 4-hydroxy-3-(all-trans-octaprenyl)benzoate + diphosphate. It participates in cofactor biosynthesis; ubiquinone biosynthesis. Its function is as follows. Catalyzes the prenylation of para-hydroxybenzoate (PHB) with an all-trans polyprenyl group. Mediates the second step in the final reaction sequence of ubiquinone-8 (UQ-8) biosynthesis, which is the condensation of the polyisoprenoid side chain with PHB, generating the first membrane-bound Q intermediate 3-octaprenyl-4-hydroxybenzoate. This Francisella tularensis subsp. tularensis (strain FSC 198) protein is 4-hydroxybenzoate octaprenyltransferase.